The primary structure comprises 258 residues: Allene oxide cyclase 3, chloroplastic (258 aa).

A chloroplast-targeting transit peptide spans 1–56 (MASSSAAMSLESISMTTLNNLSRNHQSHRSSLLGFSRSFQNLGISSNGPDFSSRSR).

It belongs to the allene oxide cyclase family. Highly expressed in fully developed leaves.

It localises to the plastid. The protein resides in the chloroplast. The enzyme catalyses (9Z,13S,15Z)-12,13-epoxyoctadeca-9,11,15-trienoate = (9S,13S,15Z)-12-oxophyto-10,15-dienoate. Involved in the production of 12-oxo-phytodienoic acid (OPDA), a precursor of jasmonic acid. The sequence is that of Allene oxide cyclase 3, chloroplastic (AOC3) from Arabidopsis thaliana (Mouse-ear cress).